The following is a 626-amino-acid chain: DNA mismatch repair protein MutL (626 aa).

Disordered stretches follow at residues 385-413 and 418-437; these read SGASVPPPSIDPVESSFGSGSGEPYPSMV and LTPSADQPSAADEQNPVAPD.

Belongs to the DNA mismatch repair MutL/HexB family.

Functionally, this protein is involved in the repair of mismatches in DNA. It is required for dam-dependent methyl-directed DNA mismatch repair. May act as a 'molecular matchmaker', a protein that promotes the formation of a stable complex between two or more DNA-binding proteins in an ATP-dependent manner without itself being part of a final effector complex. The protein is DNA mismatch repair protein MutL of Chlorobaculum parvum (strain DSM 263 / NCIMB 8327) (Chlorobium vibrioforme subsp. thiosulfatophilum).